A 484-amino-acid polypeptide reads, in one-letter code: 6-phosphogluconate dehydrogenase, decarboxylating (484 aa).

Residues 11-16 (GLAVMG), 34-36 (NRT), 76-78 (VRA), and N104 each bind NADP(+). Residues N104 and 130 to 132 (SGG) contribute to the substrate site. K185 acts as the Proton acceptor in catalysis. Residue 188–189 (HN) participates in substrate binding. The active-site Proton donor is the E192. Positions 193, 262, 289, 447, and 453 each coordinate substrate.

Belongs to the 6-phosphogluconate dehydrogenase family. Homodimer.

It catalyses the reaction 6-phospho-D-gluconate + NADP(+) = D-ribulose 5-phosphate + CO2 + NADPH. It functions in the pathway carbohydrate degradation; pentose phosphate pathway; D-ribulose 5-phosphate from D-glucose 6-phosphate (oxidative stage): step 3/3. Its function is as follows. Catalyzes the oxidative decarboxylation of 6-phosphogluconate to ribulose 5-phosphate and CO(2), with concomitant reduction of NADP to NADPH. In Aggregatibacter actinomycetemcomitans (Actinobacillus actinomycetemcomitans), this protein is 6-phosphogluconate dehydrogenase, decarboxylating.